The primary structure comprises 265 residues: Signal peptidase I (265 aa).

At 1–19 the chain is on the cytoplasmic side; sequence MQIDTKTNTNKTTAQEWKS. The helical transmembrane segment at 20–40 threads the bilayer; that stretch reads FAFVVCIALLIRILIMEPFTV. Residues 41–265 lie on the Periplasmic side of the membrane; sequence PTGSMKATIL…IFRNLYNTDE (225 aa). Active-site residues include Ser-44 and Lys-107.

It belongs to the peptidase S26 family.

It localises to the cell inner membrane. It carries out the reaction Cleavage of hydrophobic, N-terminal signal or leader sequences from secreted and periplasmic proteins.. In Rickettsia canadensis (strain McKiel), this protein is Signal peptidase I (lepB).